The chain runs to 219 residues: MTNNQFSEDTKKIADQIKDSLIGISDNLVLESKEVEEIFEELSKNEEFDYEIERILAILNEQTMDLTQLQSRIILLIRKYLDKTKNLKLKMDEKLINKNVAEVSNYLMHQHSKIVRDANKNLAKPKDKLQSLTKQARMDLKRLIKSFAVYQVYMFMNPKRIAGETKLMNFAYNMIKGGMKLAKKYEGGKEKDIKSYSPRLIKKLEKAHAGFKKNNSISI.

This is an uncharacterized protein from Rickettsia prowazekii (strain Madrid E).